Consider the following 64-residue polypeptide: Conotoxin Pn-B01122 (64 aa).

An N-terminal signal peptide occupies residues 1-22 (MRCLPVFVILLLLIASAPSVDA). Residues 23–48 (RPKTKDDIPLVSFQDNAKRALQILSN) constitute a propeptide that is removed on maturation.

This sequence belongs to the conotoxin T superfamily. In terms of processing, contains 2 disulfide bonds that can be either 'C1-C3, C2-C4' or 'C1-C4, C2-C3', since these disulfide connectivities have been observed for conotoxins with cysteine framework V (for examples, see AC P0DQQ7 and AC P81755). Expressed by the venom duct.

It is found in the secreted. The chain is Conotoxin Pn-B01122 from Conus pennaceus (Feathered cone).